Here is a 255-residue protein sequence, read N- to C-terminus: MLLVIDIGNSNIVLGLYEGDELQHHWRVSTDRNKTEDEYGMLVKSLFGSVGLGFEQVRGVIISSVVPPLNLTIERMCGKYMQQKALIIGPGIKTGLNIKYEYPREVGSDRIVNAVAAIHHYGAPLIVVDFGTATTFCYVDERAQYWGGAIAPGIGISTEALFTRAAKLPRIEITKPASVVGRNTIAAMQAGIFYGFVGQVEGIVRRIMDEYGTQPTVVATGGLASLFANETSCIHVVDQNLTLKGLRLIYERNQS.

Position 6–13 (6–13 (DIGNSNIV)) interacts with ATP. Residues tyrosine 100 and 107–110 (GSDR) contribute to the substrate site. Aspartate 109 acts as the Proton acceptor in catalysis. Aspartate 129 contributes to the K(+) binding site. Threonine 132 contacts ATP. Substrate is bound at residue threonine 184.

This sequence belongs to the type III pantothenate kinase family. Homodimer. It depends on NH4(+) as a cofactor. K(+) serves as cofactor.

It localises to the cytoplasm. The enzyme catalyses (R)-pantothenate + ATP = (R)-4'-phosphopantothenate + ADP + H(+). It participates in cofactor biosynthesis; coenzyme A biosynthesis; CoA from (R)-pantothenate: step 1/5. Catalyzes the phosphorylation of pantothenate (Pan), the first step in CoA biosynthesis. This Brevibacillus brevis (strain 47 / JCM 6285 / NBRC 100599) protein is Type III pantothenate kinase.